A 357-amino-acid polypeptide reads, in one-letter code: Alanine racemase (357 aa).

Residue Lys-35 is the Proton acceptor; specific for D-alanine of the active site. Lys-35 carries the N6-(pyridoxal phosphate)lysine modification. Arg-131 provides a ligand contact to substrate. Tyr-256 functions as the Proton acceptor; specific for L-alanine in the catalytic mechanism. Residue Met-304 coordinates substrate.

This sequence belongs to the alanine racemase family. It depends on pyridoxal 5'-phosphate as a cofactor.

The catalysed reaction is L-alanine = D-alanine. It participates in amino-acid biosynthesis; D-alanine biosynthesis; D-alanine from L-alanine: step 1/1. Its function is as follows. Catalyzes the interconversion of L-alanine and D-alanine. May also act on other amino acids. This chain is Alanine racemase (alr), found in Legionella pneumophila (strain Paris).